A 229-amino-acid chain; its full sequence is ATP synthase subunit a (229 aa).

The next 6 membrane-spanning stretches (helical) occupy residues 25 to 45 (ADAIAYTWLIIALLLIVSILA), 82 to 102 (FFPLIATLALFILVSNLIGLI), 111 to 131 (NINTTAACAVIVFVTTHIVGI), 142 to 162 (FLGPILWLAPMMFFIEVIGHF), 181 to 201 (LVLMIFFGLAPFLVPLPMMLM), and 202 to 222 (GVLVSFIQAFVFMLLAMIYIQ).

Belongs to the ATPase A chain family. F-type ATPases have 2 components, CF(1) - the catalytic core - and CF(0) - the membrane proton channel. CF(1) has five subunits: alpha(3), beta(3), gamma(1), delta(1), epsilon(1). CF(0) has three main subunits: a(1), b(2) and c(9-12). The alpha and beta chains form an alternating ring which encloses part of the gamma chain. CF(1) is attached to CF(0) by a central stalk formed by the gamma and epsilon chains, while a peripheral stalk is formed by the delta and b chains.

It is found in the cell inner membrane. Its function is as follows. Key component of the proton channel; it plays a direct role in the translocation of protons across the membrane. This chain is ATP synthase subunit a, found in Geotalea daltonii (strain DSM 22248 / JCM 15807 / FRC-32) (Geobacter daltonii).